Here is a 347-residue protein sequence, read N- to C-terminus: MPTHHPITRQHWHHSWLSALALLCASLACGAKQVDVHDPVMTREGDTWYLFSTGPGITIYSSKDRVNWRYSDRAFGTEPTWAKRVSPSFDGHLWAPDIYQHKGLFYLYYSVSAFGKNTSAIGVTVNKTLNPASPDYRWEDKGIVIESVPQRDLWNAIDPAIIADDHGQVWMSFGSFWGGLKLFKLNDDLTRPAEPQEWHSIAKLERSVLMDDSQAGSAQIEAPFILRKGDYYYLFASWGLCCRKGDSTYHLVVGRSKQVTGPYLDKTGRDMNQGGGSLLIKGNKRWVGLGHNSAYTWDGKDYLVLHAYEAADNYLQKLKILNLHWDGEGWPQVDEKELDSYISQRLK.

The first 31 residues, 1-31 (MPTHHPITRQHWHHSWLSALALLCASLACGA), serve as a signal peptide directing secretion. Asp35 is a substrate binding site. The Proton acceptor role is filled by Asp38. Residues 90–92 (DGH), 115–116 (GK), Asn155, Ser175, and Glu221 contribute to the substrate site. Glu221 acts as the Proton donor in catalysis. Residue His291 coordinates Ca(2+). Gln316 lines the substrate pocket.

The protein belongs to the glycosyl hydrolase 43 family. Homodimer.

The protein resides in the secreted. It carries out the reaction Hydrolysis of terminal non-reducing alpha-L-arabinofuranoside residues in alpha-L-arabinosides.. It functions in the pathway glycan metabolism; L-arabinan degradation. Its function is as follows. Involved in the degradation of arabinan and is a key enzyme in the complete degradation of the plant cell wall. Catalyzes the cleavage of the terminal alpha-(1-&gt;5)-arabinofuranosyl bonds of linear arabinan and carboxymethylarabinan to produce almost exclusively arabinotriose. The polypeptide is Extracellular exo-alpha-(1-&gt;5)-L-arabinofuranosidase ArbA (arbA) (Cellvibrio japonicus (strain Ueda107) (Pseudomonas fluorescens subsp. cellulosa)).